Here is a 75-residue protein sequence, read N- to C-terminus: U6-lycotoxin-Ls1b (75 aa).

Positions 1–21 are cleaved as a signal peptide; the sequence is MKLLLFTALVLVVISLIEVEA. Positions 22–25 are excised as a propeptide; it reads ENER.

This sequence belongs to the neurotoxin 19 (CSTX) family. 06 (U6-Lctx) subfamily. In terms of processing, contains 4 disulfide bonds. In terms of tissue distribution, expressed by the venom gland.

The protein resides in the secreted. The chain is U6-lycotoxin-Ls1b from Lycosa singoriensis (Wolf spider).